The chain runs to 351 residues: DNA polymerase IV (351 aa).

One can recognise a UmuC domain in the interval 4 to 185; it reads IIHIDMDCFY…LPLRKIPGVG (182 aa). Residues Asp8 and Asp103 each coordinate Mg(2+). Glu104 is an active-site residue.

This sequence belongs to the DNA polymerase type-Y family. Monomer. The cofactor is Mg(2+).

It localises to the cytoplasm. The catalysed reaction is DNA(n) + a 2'-deoxyribonucleoside 5'-triphosphate = DNA(n+1) + diphosphate. Its function is as follows. Poorly processive, error-prone DNA polymerase involved in untargeted mutagenesis. Copies undamaged DNA at stalled replication forks, which arise in vivo from mismatched or misaligned primer ends. These misaligned primers can be extended by PolIV. Exhibits no 3'-5' exonuclease (proofreading) activity. May be involved in translesional synthesis, in conjunction with the beta clamp from PolIII. This Photorhabdus laumondii subsp. laumondii (strain DSM 15139 / CIP 105565 / TT01) (Photorhabdus luminescens subsp. laumondii) protein is DNA polymerase IV.